A 52-amino-acid polypeptide reads, in one-letter code: Protein RepA (52 aa).

The H-T-H motif DNA-binding region spans 20 to 40 (KLEELAQKYGMTKSGLVNFLV).

The protein belongs to the transcriptional regulatory CopG/NikR family. As to quaternary structure, homodimer.

Its function is as follows. Regulates the plasmid copy number. RepA binds to the repAB promoter thus controlling the synthesis of the plasmid replication initiator protein RepB. In Lactiplantibacillus plantarum (Lactobacillus plantarum), this protein is Protein RepA (repA).